Here is a 394-residue protein sequence, read N- to C-terminus: MSQAPYFVPRAPYAEDPSKSKGRRFKEDESRTRTPFARDRDRIIHTSAFRRLKEKTQVFVAHEGDNFRTRLTHTLEVAQVARSLATALGLDADLAETIALAHDLGHPPFGHAGEDELEIQMREYGGFDHNVQTFRVVTELEHRYPDFIGLNLTWETLEGVIKHNGPVTNKLGKPSWKAISKYDNEYELGLGTWASAEAQVAALADDIAYNNHDVDDGVTAGLFTLDDLMDVPLIGPILAAVKSERPDLDARLTHLEAVRRMIGAMVDDVMGETLHRAAASGVQSADDVRALDHALVAFSSDMAEDLARLRGFLYERMYRHWRVNRTRSQARRILGEMFALFLREPEVLPTVWFAKSQNRDEAGRARVVCDYIAGMTDRFAIEEHRKLFHLDVWN.

Positions 1 to 36 (MSQAPYFVPRAPYAEDPSKSKGRRFKEDESRTRTPF) are disordered. Positions 25 to 36 (FKEDESRTRTPF) are enriched in basic and acidic residues. The HD domain maps to 70–210 (RLTHTLEVAQ…AALADDIAYN (141 aa)).

It belongs to the dGTPase family. Type 2 subfamily.

The protein is Deoxyguanosinetriphosphate triphosphohydrolase-like protein of Caulobacter vibrioides (strain ATCC 19089 / CIP 103742 / CB 15) (Caulobacter crescentus).